We begin with the raw amino-acid sequence, 210 residues long: dITP/XTP pyrophosphatase (210 aa).

Residue 16–21 (SNNKGK) coordinates substrate. The active-site Proton acceptor is the Asp-79. Position 79 (Asp-79) interacts with Mg(2+). Residues Ser-80, 166-169 (FGYD), Lys-189, and 194-195 (HR) contribute to the substrate site.

It belongs to the HAM1 NTPase family. Homodimer. It depends on Mg(2+) as a cofactor.

The catalysed reaction is XTP + H2O = XMP + diphosphate + H(+). It catalyses the reaction dITP + H2O = dIMP + diphosphate + H(+). The enzyme catalyses ITP + H2O = IMP + diphosphate + H(+). In terms of biological role, pyrophosphatase that catalyzes the hydrolysis of nucleoside triphosphates to their monophosphate derivatives, with a high preference for the non-canonical purine nucleotides XTP (xanthosine triphosphate), dITP (deoxyinosine triphosphate) and ITP. Seems to function as a house-cleaning enzyme that removes non-canonical purine nucleotides from the nucleotide pool, thus preventing their incorporation into DNA/RNA and avoiding chromosomal lesions. The protein is dITP/XTP pyrophosphatase of Acinetobacter baylyi (strain ATCC 33305 / BD413 / ADP1).